The chain runs to 263 residues: 3-methyl-2-oxobutanoate hydroxymethyltransferase (263 aa).

Mg(2+)-binding residues include D45 and D84. 3-methyl-2-oxobutanoate is bound by residues 45-46 (DS), D84, and K113. E115 contributes to the Mg(2+) binding site. The active-site Proton acceptor is E182.

It belongs to the PanB family. Homodecamer; pentamer of dimers. Requires Mg(2+) as cofactor.

The protein resides in the cytoplasm. It catalyses the reaction 3-methyl-2-oxobutanoate + (6R)-5,10-methylene-5,6,7,8-tetrahydrofolate + H2O = 2-dehydropantoate + (6S)-5,6,7,8-tetrahydrofolate. Its pathway is cofactor biosynthesis; coenzyme A biosynthesis. In terms of biological role, catalyzes the reversible reaction in which hydroxymethyl group from 5,10-methylenetetrahydrofolate is transferred onto alpha-ketoisovalerate to form ketopantoate. In Ignicoccus hospitalis (strain KIN4/I / DSM 18386 / JCM 14125), this protein is 3-methyl-2-oxobutanoate hydroxymethyltransferase.